Consider the following 359-residue polypeptide: Type-1 angiotensin II receptor (359 aa).

Topologically, residues 1-25 are extracellular; the sequence is MMLNSSTEDGIKRIQDDCPKAGRHN. Asn-4 carries N-linked (GlcNAc...) asparagine glycosylation. Gln-15 and Asp-17 together coordinate angiotensin II. Disulfide bonds link Cys-18–Cys-274 and Cys-101–Cys-180. A helical transmembrane segment spans residues 26 to 55; it reads YIFVMIPTLYSIIFVVGIFGNSLAVIVIYF. Over 56–61 the chain is Cytoplasmic; the sequence is YMKLKT. A helical membrane pass occupies residues 62 to 89; the sequence is VASVFLLNLALADLCFLLTLPLWAVYTA. Over 90-98 the chain is Extracellular; sequence MEYRWPFGN. The chain crosses the membrane as a helical span at residues 99 to 125; it reads YLCKIASASVSFNLYASVFLLTCLSID. Residues 126–141 lie on the Cytoplasmic side of the membrane; the sequence is RYLAIVHPMKSRLRRT. Residues 142 to 165 form a helical membrane-spanning segment; it reads MLVAKVTCIIIWLLAGLASLPAII. At 166–190 the chain is on the extracellular side; it reads HRNVFFIENTNITVCAFHYESQNST. Arg-167 lines the angiotensin II pocket. An N-linked (GlcNAc...) asparagine glycan is attached at Asn-176. Angiotensin II-binding residues include Phe-182, His-183, and Tyr-184. Asn-188 carries N-linked (GlcNAc...) asparagine glycosylation. Residues 191 to 216 form a helical membrane-spanning segment; it reads LPIGLGLTKNILGFLFPFLIILTSYT. Lys-199 is a binding site for angiotensin II. At 217-239 the chain is on the cytoplasmic side; sequence LIWKALKKAYEIQKNKPRNDDIF. The helical transmembrane segment at 240–268 threads the bilayer; sequence KIIMAIVLFFFFSWVPHQIFTFLDVLIQL. Topologically, residues 269 to 278 are extracellular; it reads GVIHDCRIAD. Residues 279-304 traverse the membrane as a helical segment; sequence IVDTAMPITICIAYFNNCLNPLFYGF. The Cytoplasmic portion of the chain corresponds to 305–359; it reads LGKKFKKYFLQLLKYIPPKAKSHSNLSTKMSTLSYRPSDNVSSSSKKPVPCFEVE. Residues 335–350 are compositionally biased toward polar residues; that stretch reads STLSYRPSDNVSSSSK. The interval 335–359 is disordered; it reads STLSYRPSDNVSSSSKKPVPCFEVE. A lipid anchor (S-palmitoyl cysteine) is attached at Cys-355.

It belongs to the G-protein coupled receptor 1 family. In terms of assembly, interacts with MAS1. Interacts with ARRB1. Interacts with FLNA (via filamin repeat 21); increases PKA-mediated phosphorylation of FLNA. In terms of processing, C-terminal Ser or Thr residues may be phosphorylated.

Its subcellular location is the cell membrane. Functionally, receptor for angiotensin II, a vasoconstricting peptide, which acts as a key regulator of blood pressure and sodium retention by the kidney. The activated receptor in turn couples to G-alpha proteins G(q) (GNAQ, GNA11, GNA14 or GNA15) and thus activates phospholipase C and increases the cytosolic Ca(2+) concentrations, which in turn triggers cellular responses such as stimulation of protein kinase C. This Oryctolagus cuniculus (Rabbit) protein is Type-1 angiotensin II receptor (AGTR1).